The following is a 326-amino-acid chain: ELAV-like protein 1 (326 aa).

S2 carries the post-translational modification N-acetylserine. At S2 the chain carries Phosphoserine. One can recognise an RRM 1 domain in the interval 20-98 (TNLIVNYLPQ…KTIKVSYARP (79 aa)). Phosphoserine is present on residues S100 and S158. Positions 106-186 (ANLYISGLPR…EPITVKFAAN (81 aa)) constitute an RRM 2 domain. A Glycyl lysine isopeptide (Lys-Gly) (interchain with G-Cter in SUMO2) cross-link involves residue K191. Phosphoserine is present on residues S197 and S202. R206 carries the post-translational modification Omega-N-methylarginine. An Asymmetric dimethylarginine; by CARM1; alternate modification is found at R217. Residue R217 is modified to Omega-N-methylarginine; alternate. A phosphoserine mark is found at S221 and S318. Residues 244-322 (WCIFIYNLGQ…KILQVSFKTN (79 aa)) form the RRM 3 domain.

The protein belongs to the RRM elav family. Monomer and homodimer (in vitro). Interacts with ANP32A. Interacts with ZNF385A; the interaction is indirect and mRNA-dependent and may regulate p53/TP53 expression. Identified in a mRNP complex, at least composed of DHX9, DDX3X, ELAVL1, HNRNPU, IGF2BP1, ILF3, PABPC1, PCBP2, PTBP2, STAU1, STAU2, SYNCRIP and YBX1. Interacts with AGO1 and AGO2. Interacts with IGF2BP1; the interaction is enhanced by SEPIN14P20 peptide RBPR. Interacts with IGF2BP2 and IGF2BP3. Interacts with HNRNPL. Interacts with DHX36; this interaction occurs in a RNA-dependent manner. Interacts with ILF3; this interaction occurs in a RNA-dependent manner. Interacts with PLEKHN1. Interacts with SHFL; the interaction increases in presence of RNA. Interacts with YBX1; interaction recruits ELAVL1 on C5-methylcytosine (m5C)-containing mRNAs, thereby promoting mRNA stability. Interacts with FXR1. Phosphorylated by MAPKAPK2. Phosphorylated by PRKCD. In terms of processing, methylated at Arg-217 by CARM1 in macrophages in response to LPS challenge. In terms of tissue distribution, ubiquitous. Detected in brain, liver, thymus and muscle.

Its subcellular location is the cytoplasm. The protein resides in the nucleus. The protein localises to the stress granule. It is found in the P-body. Functionally, RNA-binding protein that binds to the 3'-UTR region of mRNAs and increases their stability. Involved in embryonic stem cell (ESC) differentiation: preferentially binds mRNAs that are not methylated by N6-methyladenosine (m6A), stabilizing them, promoting ESC differentiation. Has also been shown to be capable of binding to m6A-containing mRNAs and contributes to MYC stability by binding to m6A-containing MYC mRNAs. Binds to poly-U elements and AU-rich elements (AREs) in the 3'-UTR of target mRNAs. Binds avidly to the AU-rich element in FOS and IL3/interleukin-3 mRNAs. In the case of the FOS AU-rich element, binds to a core element of 27 nucleotides that contain AUUUA, AUUUUA, and AUUUUUA motifs. Binds preferentially to the 5'-UUUU[AG]UUU-3' motif in vitro. With ZNF385A, binds the 3'-UTR of p53/TP53 mRNA to control their nuclear export induced by CDKN2A. Hence, may regulate p53/TP53 expression and mediate in part the CDKN2A anti-proliferative activity. May also bind with ZNF385A the CCNB1 mRNA. Increases the stability of the leptin mRNA harboring an AU-rich element (ARE) in its 3' UTR. The sequence is that of ELAV-like protein 1 (ELAVL1) from Homo sapiens (Human).